Reading from the N-terminus, the 248-residue chain is tRNA (guanine-N(1)-)-methyltransferase (248 aa).

S-adenosyl-L-methionine-binding positions include Gly113 and 133 to 138 (LGDFVL).

It belongs to the RNA methyltransferase TrmD family. As to quaternary structure, homodimer.

It is found in the cytoplasm. The enzyme catalyses guanosine(37) in tRNA + S-adenosyl-L-methionine = N(1)-methylguanosine(37) in tRNA + S-adenosyl-L-homocysteine + H(+). Specifically methylates guanosine-37 in various tRNAs. The polypeptide is tRNA (guanine-N(1)-)-methyltransferase (Albidiferax ferrireducens (strain ATCC BAA-621 / DSM 15236 / T118) (Rhodoferax ferrireducens)).